A 239-amino-acid chain; its full sequence is tRNA (guanine-N(1)-)-methyltransferase (239 aa).

S-adenosyl-L-methionine-binding positions include Gly108 and Val128 to Val133.

It belongs to the RNA methyltransferase TrmD family. As to quaternary structure, homodimer.

It localises to the cytoplasm. It carries out the reaction guanosine(37) in tRNA + S-adenosyl-L-methionine = N(1)-methylguanosine(37) in tRNA + S-adenosyl-L-homocysteine + H(+). Functionally, specifically methylates guanosine-37 in various tRNAs. The chain is tRNA (guanine-N(1)-)-methyltransferase from Helicobacter hepaticus (strain ATCC 51449 / 3B1).